A 132-amino-acid polypeptide reads, in one-letter code: Fluoride-specific ion channel FluC 3 (132 aa).

The next 4 helical transmembrane spans lie at 4 to 24 (ILLV…FGGW), 32 to 52 (FPVG…LIMY), 66 to 86 (IFLT…GYES), and 95 to 115 (LMLM…AVYL). Na(+)-binding residues include glycine 74 and threonine 77.

It belongs to the fluoride channel Fluc/FEX (TC 1.A.43) family.

The protein resides in the cell membrane. The catalysed reaction is fluoride(in) = fluoride(out). Na(+) is not transported, but it plays an essential structural role and its presence is essential for fluoride channel function. Functionally, fluoride-specific ion channel. Important for reducing fluoride concentration in the cell, thus reducing its toxicity. The protein is Fluoride-specific ion channel FluC 3 of Methanosarcina barkeri (strain Fusaro / DSM 804).